The primary structure comprises 117 residues: Large ribosomal subunit protein bL20c (117 aa).

Belongs to the bacterial ribosomal protein bL20 family.

It localises to the plastid. The protein resides in the chloroplast. Functionally, binds directly to 23S ribosomal RNA and is necessary for the in vitro assembly process of the 50S ribosomal subunit. It is not involved in the protein synthesizing functions of that subunit. This chain is Large ribosomal subunit protein bL20c, found in Vitis vinifera (Grape).